Consider the following 356-residue polypeptide: Glycerol-1-phosphate dehydrogenase [NAD(P)+] (356 aa).

NAD(+) is bound by residues 103–107 and 125–128; these read GRSID and TAAS. Asp130 lines the substrate pocket. Residue Ser134 coordinates NAD(+). Substrate is bound at residue Asp177. Residues Asp177 and His257 each coordinate Zn(2+). His261 is a substrate binding site. His273 contacts Zn(2+).

Belongs to the glycerol-1-phosphate dehydrogenase family. It depends on Zn(2+) as a cofactor.

The protein resides in the cytoplasm. The enzyme catalyses sn-glycerol 1-phosphate + NAD(+) = dihydroxyacetone phosphate + NADH + H(+). It carries out the reaction sn-glycerol 1-phosphate + NADP(+) = dihydroxyacetone phosphate + NADPH + H(+). It functions in the pathway membrane lipid metabolism; glycerophospholipid metabolism. Functionally, catalyzes the NAD(P)H-dependent reduction of dihydroxyacetonephosphate (DHAP or glycerone phosphate) to glycerol 1-phosphate (G1P). The G1P thus generated is used as the glycerophosphate backbone of phospholipids in the cellular membranes of Archaea. The polypeptide is Glycerol-1-phosphate dehydrogenase [NAD(P)+] (Methanosarcina acetivorans (strain ATCC 35395 / DSM 2834 / JCM 12185 / C2A)).